Consider the following 557-residue polypeptide: Protein NRT1/ PTR FAMILY 2.6 (557 aa).

12 helical membrane passes run Ile26–Leu46, Ile67–Asp87, Phe89–Leu109, Asn136–Leu156, Phe177–Val197, Ile203–Phe223, Ile318–Leu338, Ile356–Asn376, Val398–Lys418, Val439–Gly459, Ser478–Ile498, and Tyr518–Phe538.

Belongs to the major facilitator superfamily. Proton-dependent oligopeptide transporter (POT/PTR) (TC 2.A.17) family. As to expression, expressed in roots.

The protein resides in the membrane. Functionally, transporter involved in a passive nitrate efflux. This is Protein NRT1/ PTR FAMILY 2.6 (NPF2.6) from Arabidopsis thaliana (Mouse-ear cress).